Here is a 72-residue protein sequence, read N- to C-terminus: uncharacterized protein (72 aa).

The signal sequence occupies residues 1 to 17 (MSLGLAIAVGIVLGVVA).

This is an uncharacterized protein from Schizosaccharomyces pombe (strain 972 / ATCC 24843) (Fission yeast).